We begin with the raw amino-acid sequence, 1255 residues long: Structural polyprotein (1255 aa).

Residues M1–F33 are necessary for nucleocapsid assembly and virus assembly. Residues F33–R68 form a host transcription inhibition region. Residues L41 to L48 carry the Supraphysiological nuclear export signal motif. The disordered stretch occupies residues S44–V119. N47 carries an N-linked (GlcNAc...) asparagine; by host glycan. The short motif at K64 to R68 is the Nuclear localization signal element. Positions G80–K92 are enriched in basic residues. The binding to the viral RNA stretch occupies residues A91 to T127. Residues T93 and T108 each carry the phosphothreonine modification. Over residues N104–M118 the composition is skewed to basic residues. A ribosome-binding region spans residues P112–K126. At S124 the chain carries Phosphoserine. The Peptidase S3 domain maps to K126–W275. T127 is modified (phosphothreonine). Residue H152 is the Charge relay system of the active site. The segment at K168–Y173 is interaction with spike glycoprotein E2. Active-site charge relay system residues include D174 and S226. An interaction with spike glycoprotein E2 region spans residues E260–T264. The functions as an uncleaved signal peptide for the precursor of protein E3/E2 stretch occupies residues S276–V287. At S276–T701 the chain is on the extracellular side. 7 cysteine pairs are disulfide-bonded: C282-C291, C353-C457, C356-C361, C424-C438, C485-C600, C534-C560, and C536-C554. Residue N286 is glycosylated (N-linked (GlcNAc...) asparagine; by host). N652 carries N-linked (GlcNAc...) asparagine; by host glycosylation. A helical membrane pass occupies residues I702–L722. Over L723–A757 the chain is Cytoplasmic. Residues K725 to S729 form an interaction with the capsid protein region. 3 S-palmitoyl cysteine; by host lipidation sites follow: C730, C750, and C751. Positions C730–C750 are transient transmembrane before p62-6K protein processing. C730 and C751 are joined by a disulfide. Over E758–Q772 the chain is Extracellular. The helical transmembrane segment at Q773 to L793 threads the bilayer. A topological domain (cytoplasmic) is located at residue R794. Residues C795–E815 form a helical membrane-spanning segment. The Extracellular segment spans residues H816–S1225. Cystine bridges form between C862/C927, C875/C907, C876/C909, and C881/C891. The tract at residues V897–T914 is E1 fusion peptide loop. Residues N947 and N1083 are each glycosylated (N-linked (GlcNAc...) asparagine; by host). Intrachain disulfides connect C1072–C1084, C1114–C1189, C1119–C1193, and C1141–C1183. Residues L1226–M1246 traverse the membrane as a helical segment. Topologically, residues Y1247 to N1255 are cytoplasmic.

In terms of assembly, homodimer. Homomultimer. Interacts with host karyopherin KPNA4; this interaction allows the nuclear import of the viral capsid protein. Interacts with spike glycoprotein E2. Interacts with host IRAK1; the interaction leads to inhibition of IRAK1-dependent signaling. Part of a tetrameric complex composed of host CRM1, host importin alpha/beta dimer and the viral capsid; this complex blocks the receptor-mediated transport through the nuclear pore. Interacts with host phosphatase PPP1CA; this interaction dephosphorylates the capsid protein, which increases its ability to bind to the viral genome. As to quaternary structure, the precursor of protein E3/E2 and E1 form a heterodimer shortly after synthesis. Interacts with spike glycoprotein E2. The precursor of protein E3/E2 and E1 form a heterodimer shortly after synthesis. Processing of the precursor of protein E3/E2 into E2 and E3 results in a heterodimer of the spike glycoproteins E2 and E1. Spike at virion surface are constituted of three E2-E1 heterodimers. After target cell attachment and endocytosis, E1 change conformation to form homotrimers. Interacts with 6K protein. Interacts with host LDLRAD3; this interaction mediates viral entry to the host cell. In terms of assembly, interacts with spike glycoprotein E1. Processing of the precursor of protein E3/E2 into E2 and E3 results in a heterodimer of the spike glycoproteins E2 and E1. Spike at virion surface are constituted of a trimer of E2-E1 heterodimers. Interacts with 6K protein. Interacts with host LDLRAD3; this interaction mediates viral entry to the host cell. As to quaternary structure, oligomer. Interacts with spike glycoprotein E1. Interacts with spike glycoprotein E2. Post-translationally, structural polyprotein: Specific enzymatic cleavages in vivo yield mature proteins. Capsid protein is auto-cleaved during polyprotein translation, unmasking a signal peptide at the N-terminus of the precursor of E3/E2. The remaining polyprotein is then targeted to the host endoplasmic reticulum, where host signal peptidase cleaves it into pE2, 6K and E1 proteins. pE2 is further processed to mature E3 and E2 by host furin in trans-Golgi vesicle. In terms of processing, phosphorylated on serine and threonine residues. Palmitoylated via thioester bonds. These palmitoylations may induce disruption of the C-terminus transmembrane. This would result in the reorientation of E2 C-terminus from lumenal to cytoplasmic side. Post-translationally, N-glycosylated. In terms of processing, palmitoylated via thioester bonds.

The protein resides in the virion. It is found in the host cytoplasm. It localises to the host cell membrane. Its subcellular location is the host nucleus. The protein localises to the virion membrane. The protein resides in the host Golgi apparatus. It is found in the host trans-Golgi network. It localises to the host endoplasmic reticulum. It catalyses the reaction Autocatalytic release of the core protein from the N-terminus of the togavirus structural polyprotein by hydrolysis of a -Trp-|-Ser- bond.. Its function is as follows. Forms an icosahedral capsid with a T=4 symmetry composed of 240 copies of the capsid protein surrounded by a lipid membrane through which penetrate 80 spikes composed of trimers of E1-E2 heterodimers. The capsid protein binds to the viral RNA genome at a site adjacent to a ribosome binding site for viral genome translation following genome release. Possesses a protease activity that results in its autocatalytic cleavage from the nascent structural protein. Following its self-cleavage, the capsid protein transiently associates with ribosomes, and within several minutes the protein binds to viral RNA and rapidly assembles into icosahedric core particles. The resulting nucleocapsid eventually associates with the cytoplasmic domain of the spike glycoprotein E2 at the cell membrane, leading to budding and formation of mature virions. In case of infection, new virions attach to target cells and after clathrin-mediated endocytosis their membrane fuses with the host endosomal membrane. This leads to the release of the nucleocapsid into the cytoplasm, followed by an uncoating event necessary for the genomic RNA to become accessible. The uncoating might be triggered by the interaction of capsid proteins with ribosomes. Binding of ribosomes would release the genomic RNA since the same region is genomic RNA-binding and ribosome-binding. Specifically inhibits interleukin-1 receptor-associated kinase 1/IRAK1-dependent signaling during viral entry, representing a means by which the alphaviruses may evade innate immune detection and activation prior to viral gene expression. Inhibits host transcription. Forms a tetrameric complex with XPO1/CRM1 and the nuclear import receptor importin. This complex blocks the central channel of host nuclear pores thereby inhibiting the receptor-mediated nuclear transport and thus the host mRNA and rRNA transcription. The inhibition of transcription is linked to a cytopathic effect on the host cell. In terms of biological role, provides the signal sequence for the translocation of the precursor of protein E3/E2 to the host endoplasmic reticulum. Furin-cleaved E3 remains associated with spike glycoprotein E1 and mediates pH protection of the latter during the transport via the secretory pathway. After virion release from the host cell, the assembly protein E3 is gradually released in the extracellular space. Plays a role in viral attachment to target host cell, by binding to the cell receptor LDLRAD3. Synthesized as a p62 precursor which is processed by furin at the cell membrane just before virion budding, giving rise to E2-E1 heterodimer. The p62-E1 heterodimer is stable, whereas E2-E1 is unstable and dissociate at low pH. p62 is processed at the last step, presumably to avoid E1 fusion activation before its final export to cell surface. E2 C-terminus contains a transitory transmembrane that would be disrupted by palmitoylation, resulting in reorientation of the C-terminal tail from lumenal to cytoplasmic side. This step is critical since E2 C-terminus is involved in budding by interacting with capsid proteins. This release of E2 C-terminus in cytoplasm occurs lately in protein export, and precludes premature assembly of particles at the endoplasmic reticulum membrane. Functionally, acts as a viroporin that participates in virus glycoprotein processing and transport to the plasma membrane, cell permeabilization and budding of viral particles. Disrupts the calcium homeostasis of the cell, probably at the endoplasmic reticulum level. This leads to cytoplasmic calcium elevation. Because of its lipophilic properties, the 6K protein is postulated to influence the selection of lipids that interact with the transmembrane domains of the glycoproteins, which, in turn, affects the deformability of the bilayer required for the extreme curvature that occurs as budding proceeds. Present in low amount in virions, about 3% compared to viral glycoproteins. Its function is as follows. Class II viral fusion protein. Fusion activity is inactive as long as E1 is bound to E2 in mature virion. After virus attachment to cell receptor LDLRAD3 and endocytosis, acidification of the endosome induce dissociation of E1/E2 heterodimer and concomitant trimerization of the E1 subunits. This E1 trimer is fusion active, and promotes release of viral nucleocapsid in cytoplasm after endosome and viral membrane fusion. Efficient fusion requires the presence of cholesterol and sphingolipid in the target membrane. The sequence is that of Structural polyprotein from Venezuelan equine encephalitis virus (strain 3880) (VEEV).